Reading from the N-terminus, the 262-residue chain is Glycerol uptake facilitator protein (262 aa).

The Cytoplasmic segment spans residues 1 to 7 (MNFCSKK). Residues 8–36 (KILKQCFFEFLGTGLIIFLGISSLVVSKL) traverse the membrane as a helical segment. The Extracellular segment spans residues 37–41 (TNFHF). Residues 42-62 (NHCEISCIWGLGVFISICFCS) form a helical membrane-spanning segment. At 63–65 (SVS) the chain is on the cytoplasmic side. An intramembrane segment occupies 66–69 (GAHL). Residues 70–72 (NPA) carry the NPA 1 motif. Positions 70-80 (NPAITIFLFLS) form an intramembrane region, helical. At 81 to 86 (SQFNKK) the chain is on the cytoplasmic side. The chain crosses the membrane as a helical span at residues 87-110 (KVIPYILSQISGTFFFTFLIYLIF). Over 111–145 (NNLLNSFESKYNIVRGTKKSLELASLFCVFPKENY) the chain is Extracellular. Residues 146-171 (NFIHDFILEILIGIIFIIILMKLSEK) form a helical membrane-spanning segment. Residues 172 to 180 (NNLFKFYKF) are Cytoplasmic-facing. The chain crosses the membrane as a helical span at residues 181–197 (INPFLIGTLVIIINLFL). At 198–201 (TSYS) the chain is on the extracellular side. An intramembrane segment occupies 202 to 205 (NITL). An NPA 2 motif is present at residues 206-208 (NPA). Residues 206 to 219 (NPARDLGPRIFLSL) constitute an intramembrane region (helical). Residues 220–234 (IGWGKLAFTGDDNII) lie on the Extracellular side of the membrane. Residues 235-259 (FPYFLIPTIAPIIGINLGGWIYILY) form a helical membrane-spanning segment. The Cytoplasmic portion of the chain corresponds to 260 to 262 (IKK).

The protein belongs to the MIP/aquaporin (TC 1.A.8) family.

Its subcellular location is the cell membrane. It carries out the reaction glycerol(in) = glycerol(out). Functionally, mediates glycerol diffusion across the cytoplasmic membrane via a pore-type mechanism. The sequence is that of Glycerol uptake facilitator protein (glpF) from Buchnera aphidicola subsp. Schizaphis graminum (strain Sg).